Consider the following 1185-residue polypeptide: Liprin-alpha-4 (1185 aa).

Coiled coils occupy residues alanine 24 to serine 123 and aspartate 165 to glycine 499. Disordered stretches follow at residues serine 638–arginine 709 and glutamate 721–isoleucine 757. A Phosphoserine modification is found at serine 640. The span at glycine 645–alanine 656 shows a compositional bias: polar residues. Position 681 is a phosphoserine (serine 681). Over residues serine 684–isoleucine 695 the composition is skewed to basic and acidic residues. Residues aspartate 729–aspartate 742 show a composition bias toward low complexity. SAM domains lie at tryptophan 829–leucine 895, asparagine 944–leucine 1008, and tryptophan 1032–leucine 1101.

This sequence belongs to the liprin family. Liprin-alpha subfamily. As to quaternary structure, forms homodimers and heterodimers with liprins-alpha and liprins-beta. Interacts with the second PTPase domain of PTPRD, PTPRF and PTPRS. Interacts with RIMS1 and RIMS2. Interacts with GIT1 and GIT2. Interacts with GRIP1. Interacts with KIF1A. As to expression, expressed only in the heart, brain, and skeletal muscle.

Its subcellular location is the cytoplasm. It localises to the cell surface. Functionally, may regulate the disassembly of focal adhesions. May localize receptor-like tyrosine phosphatases type 2A at specific sites on the plasma membrane, possibly regulating their interaction with the extracellular environment and their association with substrates. This Homo sapiens (Human) protein is Liprin-alpha-4 (PPFIA4).